The primary structure comprises 285 residues: Small ribosomal subunit biogenesis GTPase RsgA (285 aa).

One can recognise a CP-type G domain in the interval 61 to 215; it reads KNQLIRPKVA…IIDSPGFSSF (155 aa). GTP-binding positions include 110-113 and 159-167; these read TKID and GQTGVGKTS. Zn(2+) contacts are provided by C239, C244, H246, and C254.

This sequence belongs to the TRAFAC class YlqF/YawG GTPase family. RsgA subfamily. In terms of assembly, monomer. Associates with 30S ribosomal subunit, binds 16S rRNA. Requires Zn(2+) as cofactor.

It is found in the cytoplasm. One of several proteins that assist in the late maturation steps of the functional core of the 30S ribosomal subunit. Helps release RbfA from mature subunits. May play a role in the assembly of ribosomal proteins into the subunit. Circularly permuted GTPase that catalyzes slow GTP hydrolysis, GTPase activity is stimulated by the 30S ribosomal subunit. The sequence is that of Small ribosomal subunit biogenesis GTPase RsgA from Mesomycoplasma hyopneumoniae (strain 7448) (Mycoplasma hyopneumoniae).